The chain runs to 210 residues: Large ribosomal subunit protein uL4 (210 aa).

The disordered stretch occupies residues 44–79 (QHQGTHKVKTRSEVSGGGRKPYRQKGTGNARRGSSR).

Belongs to the universal ribosomal protein uL4 family. As to quaternary structure, part of the 50S ribosomal subunit.

In terms of biological role, one of the primary rRNA binding proteins, this protein initially binds near the 5'-end of the 23S rRNA. It is important during the early stages of 50S assembly. It makes multiple contacts with different domains of the 23S rRNA in the assembled 50S subunit and ribosome. Forms part of the polypeptide exit tunnel. The polypeptide is Large ribosomal subunit protein uL4 (Chloroherpeton thalassium (strain ATCC 35110 / GB-78)).